We begin with the raw amino-acid sequence, 429 residues long: Enolase (429 aa).

Glutamine 167 contacts (2R)-2-phosphoglycerate. The Proton donor role is filled by glutamate 209. 3 residues coordinate Mg(2+): aspartate 246, glutamate 289, and aspartate 316. (2R)-2-phosphoglycerate-binding residues include lysine 341, arginine 370, serine 371, and lysine 392. Lysine 341 acts as the Proton acceptor in catalysis.

It belongs to the enolase family. As to quaternary structure, component of the RNA degradosome, a multiprotein complex involved in RNA processing and mRNA degradation. Requires Mg(2+) as cofactor.

The protein localises to the cytoplasm. It is found in the secreted. Its subcellular location is the cell surface. The enzyme catalyses (2R)-2-phosphoglycerate = phosphoenolpyruvate + H2O. It participates in carbohydrate degradation; glycolysis; pyruvate from D-glyceraldehyde 3-phosphate: step 4/5. Its function is as follows. Catalyzes the reversible conversion of 2-phosphoglycerate (2-PG) into phosphoenolpyruvate (PEP). It is essential for the degradation of carbohydrates via glycolysis. This chain is Enolase, found in Pseudomonas entomophila (strain L48).